The following is a 209-amino-acid chain: Uracil phosphoribosyltransferase (209 aa).

Residues R79, R104, and 131-139 (DPMLATGGS) each bind 5-phospho-alpha-D-ribose 1-diphosphate. Uracil contacts are provided by residues I194 and 199 to 201 (GDA). D200 provides a ligand contact to 5-phospho-alpha-D-ribose 1-diphosphate.

This sequence belongs to the UPRTase family. Requires Mg(2+) as cofactor.

It catalyses the reaction UMP + diphosphate = 5-phospho-alpha-D-ribose 1-diphosphate + uracil. The protein operates within pyrimidine metabolism; UMP biosynthesis via salvage pathway; UMP from uracil: step 1/1. Its activity is regulated as follows. Allosterically activated by GTP. Its function is as follows. Catalyzes the conversion of uracil and 5-phospho-alpha-D-ribose 1-diphosphate (PRPP) to UMP and diphosphate. This Bacillus pumilus (strain SAFR-032) protein is Uracil phosphoribosyltransferase.